The primary structure comprises 287 residues: Nucleotide-binding protein VIBHAR_03667 (287 aa).

Residue 8 to 15 participates in ATP binding; that stretch reads GHSGAGKS. 56-59 contacts GTP; sequence DIRN.

The protein belongs to the RapZ-like family.

In terms of biological role, displays ATPase and GTPase activities. The sequence is that of Nucleotide-binding protein VIBHAR_03667 from Vibrio campbellii (strain ATCC BAA-1116).